A 193-amino-acid chain; its full sequence is dCTP deaminase, dUMP-forming (193 aa).

Residues 101–106 (KSSLGR), D119, 127–129 (TLE), Q148, Y162, and Q174 each bind dCTP. Catalysis depends on E129, which acts as the Proton donor/acceptor. Positions 161 to 184 (PYGSETTGSHYQGQRGPTPSRSYQ) are disordered.

It belongs to the dCTP deaminase family. In terms of assembly, homotrimer.

It carries out the reaction dCTP + 2 H2O = dUMP + NH4(+) + diphosphate. It functions in the pathway pyrimidine metabolism; dUMP biosynthesis; dUMP from dCTP: step 1/1. Functionally, bifunctional enzyme that catalyzes both the deamination of dCTP to dUTP and the hydrolysis of dUTP to dUMP without releasing the toxic dUTP intermediate. This is dCTP deaminase, dUMP-forming from Bifidobacterium animalis subsp. lactis (strain AD011).